An 83-amino-acid polypeptide reads, in one-letter code: Mu-theraphotoxin-Hhn2b 3 (83 aa).

A signal peptide spans 1 to 21 (MKASMFLALAGLVLLFVVCYA). Residues 22-48 (SESEEKEFPRELISKIFAVDDFKGEVR) constitute a propeptide that is removed on maturation. Cystine bridges form between Cys50–Cys65, Cys57–Cys70, and Cys64–Cys77. Leu81 carries the post-translational modification Leucine amide.

This sequence belongs to the neurotoxin 10 (Hwtx-1) family. 14 (Hntx-1) subfamily. Monomer. In terms of tissue distribution, expressed by the venom gland.

Its subcellular location is the secreted. Its function is as follows. Weakly blocks the rat SCN2A/SCN1B (Nav1.2/beta-1) sodium channel (IC(50)=68 uM) and the insect sodium channel para/tipE (IC(50)=4.3 uM), without altering the activation or inactivation kinetics (depressant toxin). The protein is Mu-theraphotoxin-Hhn2b 3 of Cyriopagopus hainanus (Chinese bird spider).